We begin with the raw amino-acid sequence, 212 residues long: Eukaryotic translation initiation factor 4E-4 (212 aa).

Cys143 and Cys147 form a disulfide bridge.

This sequence belongs to the eukaryotic initiation factor 4E family. In terms of assembly, eIF4F is a multi-subunit complex, the composition of which varies with external and internal environmental conditions. It is composed of at least eIF4A, eIF4E and eIF4G. eIF4E is also known to interact with other partners. As to expression, enriched in somatic cells.

In terms of biological role, recognizes and binds the 7-methylguanosine-containing mRNA cap during an early step in the initiation of protein synthesis and facilitates ribosome binding by inducing the unwinding of the mRNAs secondary structures. All 5 eIF4E proteins bind monomethyl cap structures. Only ife-1, ife-2 and ife-5 bind trimethyl cap structures which result from trans-splicing. Translation of trimethyl cap structure mRNAs may be regulated by intracellular redox state; disulfide bonds change the width and depth of the cap-binding cavity determining selectivity to mRNA caps. The sequence is that of Eukaryotic translation initiation factor 4E-4 (ife-4) from Caenorhabditis elegans.